Here is a 273-residue protein sequence, read N- to C-terminus: SUMO-1 cysteine protease S273R (273 aa).

Active-site residues include H168 and N187. Residue Q226 coordinates substrate. C232 functions as the Nucleophile in the catalytic mechanism.

The protein belongs to the peptidase C63 family.

It localises to the host cytoplasm. Its subcellular location is the virion. Its function is as follows. Cysteine protease that plays several role during infection including processing of the structural polyprotein or inhibition of the host immune response. Catalyzes the maturation of the pp220 and pp62 polyprotein precursors into core-shell proteins. Plays a role in the disruption of host pyroptosis via specific cleavage of gasdermin D/GSDMD. In addition, strongly decreases the host cGAS-STING signaling by targeting IKBKE via its enzymatic activity. Also impairs host FOXJ1-mediated antiviral effect via degradation of FOXJ1. This is SUMO-1 cysteine protease S273R from Ornithodoros (relapsing fever ticks).